Consider the following 711-residue polypeptide: Forkhead box protein P1 (711 aa).

The span at 1–19 (MMQESGSEAKSNGSTIQNG) shows a compositional bias: polar residues. A disordered region spans residues 1-41 (MMQESGSEAKSNGSTIQNGSSGGNHLLECGTLRDTRSNGEA). Position 115 is a phosphoserine (Ser-115). Disordered stretches follow at residues 273-292 (HTAEETTGSNHSSLDLTSTC) and 305-332 (MNPHASTNGQLSVHTPKRESLSHEEHPH). The segment covering 305–317 (MNPHASTNGQLSV) has biased composition (polar residues). Over residues 320-332 (PKRESLSHEEHPH) the composition is skewed to basic and acidic residues. Residue Lys-321 forms a Glycyl lysine isopeptide (Lys-Gly) (interchain with G-Cter in SUMO2) linkage. A C2H2-type zinc finger spans residues 340–365 (GVCKWPGCEAVCDDFPAFLKHLNSEH). Residues 382 to 403 (VQQLELQLAKDKERLQAMMTHL) are leucine-zipper. Residues Lys-406 and Lys-411 each participate in a glycyl lysine isopeptide (Lys-Gly) (interchain with G-Cter in SUMO2) cross-link. Positions 416–420 (PLNLV) are CTBP1-binding. A compositionally biased stretch (polar residues) spans 424–437 (TLSKSASEASPQSL). The interval 424–456 (TLSKSASEASPQSLPHTPTTPTAPLTPVTQGPS) is disordered. Residues 438–452 (PHTPTTPTAPLTPVT) are compositionally biased toward low complexity. Lys-476 participates in a covalent cross-link: Glycyl lysine isopeptide (Lys-Gly) (interchain with G-Cter in SUMO2). The fork-head DNA-binding region spans 499–589 (RPPFTYASLI…PQKISGNPSL (91 aa)). The segment at 645–711 (EHTNSNESDS…EDEPVNEDME (67 aa)) is disordered. A compositionally biased stretch (polar residues) spans 646–657 (HTNSNESDSSPG). The residue at position 687 (Thr-687) is a Phosphothreonine. At Ser-692 the chain carries Phosphoserine. Residues 701-711 (YEDEPVNEDME) are compositionally biased toward acidic residues.

As to quaternary structure, forms homodimers and heterodimers with FOXP2 and FOXP4. Dimerization is required for DNA-binding. Self-associates. Interacts with CTBP1. Interacts with NCOR2 and AR. Interacts with FOXP2. Interacts with TBR1. Interacts with AURKA; this interaction facilitates the phosphorylation of FOXP1, which suppresses the expression of FBXL7. Interacts with ZMYM2.

Its subcellular location is the nucleus. Its function is as follows. Transcriptional repressor. Can act with CTBP1 to synergistically repress transcription but CTPBP1 is not essential. Plays an important role in the specification and differentiation of lung epithelium. Acts cooperatively with FOXP4 to regulate lung secretory epithelial cell fate and regeneration by restricting the goblet cell lineage program; the function may involve regulation of AGR2. Essential transcriptional regulator of B-cell development. Involved in regulation of cardiac muscle cell proliferation. Involved in the columnar organization of spinal motor neurons. Promotes the formation of the lateral motor neuron column (LMC) and the preganglionic motor column (PGC) and is required for respective appropriate motor axon projections. The segment-appropriate generation of spinal cord motor columns requires cooperation with other Hox proteins. Can regulate PITX3 promoter activity; may promote midbrain identity in embryonic stem cell-derived dopamine neurons by regulating PITX3. Negatively regulates the differentiation of T follicular helper cells T(FH)s. Involved in maintenance of hair follicle stem cell quiescence; the function probably involves regulation of FGF18. Represses transcription of various pro-apoptotic genes and cooperates with NF-kappa B-signaling in promoting B-cell expansion by inhibition of caspase-dependent apoptosis. Binds to CSF1R promoter elements and is involved in regulation of monocyte differentiation and macrophage functions; repression of CSF1R in monocytes seems to involve NCOR2 as corepressor. Involved in endothelial cell proliferation, tube formation and migration indicative for a role in angiogenesis; the role in neovascularization seems to implicate suppression of SEMA5B. Can negatively regulate androgen receptor signaling. Acts as a transcriptional activator of the FBXL7 promoter; this activity is regulated by AURKA. This is Forkhead box protein P1 (Foxp1) from Rattus norvegicus (Rat).